The primary structure comprises 306 residues: Pantothenate kinase (306 aa).

Residue 91–98 (GSVAVGKS) participates in ATP binding.

The protein belongs to the prokaryotic pantothenate kinase family.

It is found in the cytoplasm. The catalysed reaction is (R)-pantothenate + ATP = (R)-4'-phosphopantothenate + ADP + H(+). It functions in the pathway cofactor biosynthesis; coenzyme A biosynthesis; CoA from (R)-pantothenate: step 1/5. This is Pantothenate kinase from Streptococcus equi subsp. zooepidemicus (strain H70).